Reading from the N-terminus, the 353-residue chain is MGCFFSKKAKRKRNSEEEQPQQDGEEPKQYSWDKREKVDPKDYMFTGLKDQTVGKLPDKVAGQQFVIQECENCNIYIFDHSATITIDDCTNCRIFLGPVKGSVFFRDCKDCKCVVACQQFRTRDCRRMDVFLCCSTQPIIESSTSMKFGCFQYYYPELALQFKEAGLSILNNTWSNIHDFTPVAGETNWSLLPPDAVIQDFIPLPDSDELKCVRVSADVHKSIIPVTWGQRLKKSDESCLVVFFAGDYTTANARKMIDEMVGKGLSLIQTKEVAMKIEDAKRVFQDNITDLICLLEKGPVVALEFNGEGAVDSCQTVINNTFSGTKVFVSESKESASRDVDNFYNFADMQMGM.

The interval 1–37 (MGCFFSKKAKRKRNSEEEQPQQDGEEPKQYSWDKREK) is disordered. The N-myristoyl glycine moiety is linked to residue glycine 2. Cysteine 3 is lipidated: S-palmitoyl cysteine. The segment covering 25-37 (EEPKQYSWDKREK) has biased composition (basic and acidic residues). In terms of domain architecture, C-CAP/cofactor C-like spans 27-182 (PKQYSWDKRE…TWSNIHDFTP (156 aa)). GTP is bound by residues 101-102 (GS) and 118-121 (QQFR).

Belongs to the TBCC family. In terms of processing, myristoylated on Gly-2; which may be required for membrane targeting. Palmitoylated on Cys-3; which may be required for plasma membrane targeting.

Its subcellular location is the cell membrane. In terms of biological role, acts as a GTPase-activating protein (GAP) for tubulin in concert with tubulin-specific chaperone C, but does not enhance tubulin heterodimerization. Acts as a GTPase-activating protein. May act as guanine nucleotide dissociation inhibitor towards ADP-ribosylation factor-like proteins. The sequence is that of Protein XRP2 (rp2) from Xenopus laevis (African clawed frog).